The following is a 1165-amino-acid chain: DNA-directed RNA polymerase subunit beta (1165 aa).

Belongs to the RNA polymerase beta chain family. In terms of assembly, the RNAP catalytic core consists of 2 alpha, 1 beta, 1 beta' and 1 omega subunit. When a sigma factor is associated with the core the holoenzyme is formed, which can initiate transcription.

It catalyses the reaction RNA(n) + a ribonucleoside 5'-triphosphate = RNA(n+1) + diphosphate. Functionally, DNA-dependent RNA polymerase catalyzes the transcription of DNA into RNA using the four ribonucleoside triphosphates as substrates. This chain is DNA-directed RNA polymerase subunit beta, found in Leifsonia xyli subsp. xyli (strain CTCB07).